A 76-amino-acid polypeptide reads, in one-letter code: Putative membrane protein insertion efficiency factor (76 aa).

Belongs to the UPF0161 family.

It is found in the cell inner membrane. In terms of biological role, could be involved in insertion of integral membrane proteins into the membrane. This Paraburkholderia phytofirmans (strain DSM 17436 / LMG 22146 / PsJN) (Burkholderia phytofirmans) protein is Putative membrane protein insertion efficiency factor.